Consider the following 141-residue polypeptide: Large ribosomal subunit protein uL11 (141 aa).

This sequence belongs to the universal ribosomal protein uL11 family. As to quaternary structure, part of the ribosomal stalk of the 50S ribosomal subunit. Interacts with L10 and the large rRNA to form the base of the stalk. L10 forms an elongated spine to which L12 dimers bind in a sequential fashion forming a multimeric L10(L12)X complex. One or more lysine residues are methylated.

Forms part of the ribosomal stalk which helps the ribosome interact with GTP-bound translation factors. This chain is Large ribosomal subunit protein uL11, found in Chloroflexus aurantiacus (strain ATCC 29366 / DSM 635 / J-10-fl).